Consider the following 1009-residue polypeptide: DENN domain-containing protein 2A (1009 aa).

Disordered stretches follow at residues 15-153, 171-334, 434-479, and 498-532; these read AEAS…LRFQ, KDGS…HRKS, KLLD…KKRK, and KRVK…LKAH. Composition is skewed to basic and acidic residues over residues 45 to 59, 130 to 147, 218 to 247, and 275 to 284; these read NIKD…KKEV, QPER…EPRL, HPSD…DRSL, and HAGEGDKDGK. Residues 297–314 are compositionally biased toward pro residues; sequence PPLPSLPPPPLPSSPPPS. Residues 434–443 show a composition bias toward basic and acidic residues; the sequence is KLLDTRKLSR. The span at 503–513 shows a compositional bias: polar residues; sequence LSQSMESNSGK. A Phosphoserine modification is found at serine 551. The 150-residue stretch at 566-715 folds into the uDENN domain; sequence EYFVVVSLHK…PFPALGKTIL (150 aa). The 134-residue stretch at 737–870 folds into the cDENN domain; the sequence is RLEHVDFESL…LQVALEHILE (134 aa). The dDENN domain maps to 872–969; it reads RNELACEQDE…QERELRRQDA (98 aa).

Its subcellular location is the cytoplasm. The protein localises to the cytoskeleton. Guanine nucleotide exchange factor (GEF) which may activate RAB9A and RAB9B. Promotes the exchange of GDP to GTP, converting inactive GDP-bound Rab proteins into their active GTP-bound form. May play a role in late endosomes back to trans-Golgi network/TGN transport. The chain is DENN domain-containing protein 2A (DENND2A) from Homo sapiens (Human).